The sequence spans 345 residues: RNA polymerase II holoenzyme cyclin-like subunit (345 aa).

The Cyclin N-terminal domain maps to 23–147 (ESRRKLLLLE…KLAEFEFYLI (125 aa)).

Belongs to the cyclin family. Cyclin C subfamily. As to quaternary structure, component of the SRB8-11 complex, a regulatory module of the Mediator complex.

It localises to the nucleus. Component of the SRB8-11 complex. The SRB8-11 complex is a regulatory module of the Mediator complex which is itself involved in regulation of basal and activated RNA polymerase II-dependent transcription. The SRB8-11 complex may be involved in the transcriptional repression of a subset of genes regulated by Mediator. It may inhibit the association of the Mediator complex with RNA polymerase II to form the holoenzyme complex. The SRB8-11 complex phosphorylates the C-terminal domain (CTD) of the largest subunit of RNA polymerase II. The chain is RNA polymerase II holoenzyme cyclin-like subunit (SSN8) from Debaryomyces hansenii (strain ATCC 36239 / CBS 767 / BCRC 21394 / JCM 1990 / NBRC 0083 / IGC 2968) (Yeast).